The chain runs to 139 residues: Small ribosomal subunit protein bS6 (139 aa).

The interval 118–139 (SFKGGSKIETPTGSESTDIQEK) is disordered. The span at 126–139 (ETPTGSESTDIQEK) shows a compositional bias: polar residues.

This sequence belongs to the bacterial ribosomal protein bS6 family.

Its function is as follows. Binds together with bS18 to 16S ribosomal RNA. The protein is Small ribosomal subunit protein bS6 of Borrelia garinii subsp. bavariensis (strain ATCC BAA-2496 / DSM 23469 / PBi) (Borreliella bavariensis).